A 513-amino-acid polypeptide reads, in one-letter code: Glutamate--tRNA ligase 2 (513 aa).

Residues 11–21 (PSPTGFLHIGS) carry the 'HIGH' region motif. The 'KMSKS' region signature appears at 240–244 (KLSKR). Residue Lys-243 participates in ATP binding. In terms of domain architecture, RPE1 insert spans 335 to 383 (NTLLRHLPYREEFGGNTERSTAAYIDIREDASTGLTYKLPLAVELPKKF).

Belongs to the class-I aminoacyl-tRNA synthetase family. Glutamate--tRNA ligase type 1 subfamily. As to quaternary structure, monomer.

The protein resides in the cytoplasm. The catalysed reaction is tRNA(Glu) + L-glutamate + ATP = L-glutamyl-tRNA(Glu) + AMP + diphosphate. Functionally, catalyzes the attachment of glutamate to tRNA(Glu) in a two-step reaction: glutamate is first activated by ATP to form Glu-AMP and then transferred to the acceptor end of tRNA(Glu). The chain is Glutamate--tRNA ligase 2 from Rickettsia conorii (strain ATCC VR-613 / Malish 7).